The sequence spans 423 residues: Protein phosphatase 2C 77 (423 aa).

Residues 74 to 95 (GDEINGSDEFDPRSMNQSEKKV) form a disordered region. One can recognise a PPM-type phosphatase domain in the interval 112–411 (LYGVTSICGR…DNISVVVVDL (300 aa)). The Mg(2+) site is built by Asp165, Asp251, and Ser252. Cys257 and Cys331 are oxidised to a cystine. Mg(2+) is bound by residues Asp337 and Asp402.

It belongs to the PP2C family. Interacts with SPK1, CIPK15/PKS3, GPX3, SCAR1, SCAR2, SCAR3 and SCARL. Also interacts with CIPK24/SOS2. Binds to the fibrillin precursor protein. Interacts with ABA-bounded PYR1, PYL1, PYL2, PYL3, PYL4, PYL5, PYL6, PYL8 and PYL9, and with free PYL2, PYL3 and PYL4. Interacts with and represses GHR1, and, to a lesser extent, SRK2E/OST1. It depends on Mg(2+) as a cofactor. Mn(2+) is required as a cofactor.

It carries out the reaction O-phospho-L-seryl-[protein] + H2O = L-seryl-[protein] + phosphate. The enzyme catalyses O-phospho-L-threonyl-[protein] + H2O = L-threonyl-[protein] + phosphate. With respect to regulation, phosphatase activity repressed by oxidized ATGPX3, free fatty acids (e.g. arachidonic acid (20:4) and Linolenic acid (18:3)) and by H(2)O(2). Repressed by PYR/PYL/RCAR ABA receptors in an ABA-dependent manner. In terms of biological role, repressor of the abscisic acid (ABA) signaling pathway that regulates numerous ABA responses, such as stomatal closure, osmotic water permeability of the plasma membrane (Pos), high light stress, response to glucose, seed germination and inhibition of vegetative growth. During the stomatal closure regulation, modulates the inward calcium-channel permeability as well as H(2)O(2) and oxidative burst in response to ABA and dehydration. Represses GHR1 and, to some extent, SRK2E/OST1, kinases involved in the regulation of SLAC1-dependent stomatal closure. Controls negatively fibrillin that is involved in mediating ABA-induced photoprotection. May be implicated in ABA content regulation. Involved in acquired thermotolerance of root growth and seedling survival. Required for the Erwinia amylovora harpin-induced (HrpN) drought tolerance. Involved in the hydrotropic response. The polypeptide is Protein phosphatase 2C 77 (Arabidopsis thaliana (Mouse-ear cress)).